The chain runs to 313 residues: 4-hydroxy-3-methylbut-2-enyl diphosphate reductase (313 aa).

C13 is a [4Fe-4S] cluster binding site. Residues H41 and H75 each coordinate (2E)-4-hydroxy-3-methylbut-2-enyl diphosphate. Residues H41 and H75 each contribute to the dimethylallyl diphosphate site. H41 and H75 together coordinate isopentenyl diphosphate. C97 contributes to the [4Fe-4S] cluster binding site. (2E)-4-hydroxy-3-methylbut-2-enyl diphosphate is bound at residue H125. H125 contacts dimethylallyl diphosphate. H125 serves as a coordination point for isopentenyl diphosphate. The active-site Proton donor is E127. T168 serves as a coordination point for (2E)-4-hydroxy-3-methylbut-2-enyl diphosphate. C218 provides a ligand contact to [4Fe-4S] cluster. (2E)-4-hydroxy-3-methylbut-2-enyl diphosphate-binding residues include S246, S247, N248, and S295. The dimethylallyl diphosphate site is built by S246, S247, N248, and S295. Isopentenyl diphosphate-binding residues include S246, S247, N248, and S295.

This sequence belongs to the IspH family. The cofactor is [4Fe-4S] cluster.

The catalysed reaction is isopentenyl diphosphate + 2 oxidized [2Fe-2S]-[ferredoxin] + H2O = (2E)-4-hydroxy-3-methylbut-2-enyl diphosphate + 2 reduced [2Fe-2S]-[ferredoxin] + 2 H(+). The enzyme catalyses dimethylallyl diphosphate + 2 oxidized [2Fe-2S]-[ferredoxin] + H2O = (2E)-4-hydroxy-3-methylbut-2-enyl diphosphate + 2 reduced [2Fe-2S]-[ferredoxin] + 2 H(+). It participates in isoprenoid biosynthesis; dimethylallyl diphosphate biosynthesis; dimethylallyl diphosphate from (2E)-4-hydroxy-3-methylbutenyl diphosphate: step 1/1. The protein operates within isoprenoid biosynthesis; isopentenyl diphosphate biosynthesis via DXP pathway; isopentenyl diphosphate from 1-deoxy-D-xylulose 5-phosphate: step 6/6. Functionally, catalyzes the conversion of 1-hydroxy-2-methyl-2-(E)-butenyl 4-diphosphate (HMBPP) into a mixture of isopentenyl diphosphate (IPP) and dimethylallyl diphosphate (DMAPP). Acts in the terminal step of the DOXP/MEP pathway for isoprenoid precursor biosynthesis. In Chlorobium phaeovibrioides (strain DSM 265 / 1930) (Prosthecochloris vibrioformis (strain DSM 265)), this protein is 4-hydroxy-3-methylbut-2-enyl diphosphate reductase.